A 158-amino-acid chain; its full sequence is SsrA-binding protein (158 aa).

Belongs to the SmpB family.

It is found in the cytoplasm. In terms of biological role, required for rescue of stalled ribosomes mediated by trans-translation. Binds to transfer-messenger RNA (tmRNA), required for stable association of tmRNA with ribosomes. tmRNA and SmpB together mimic tRNA shape, replacing the anticodon stem-loop with SmpB. tmRNA is encoded by the ssrA gene; the 2 termini fold to resemble tRNA(Ala) and it encodes a 'tag peptide', a short internal open reading frame. During trans-translation Ala-aminoacylated tmRNA acts like a tRNA, entering the A-site of stalled ribosomes, displacing the stalled mRNA. The ribosome then switches to translate the ORF on the tmRNA; the nascent peptide is terminated with the 'tag peptide' encoded by the tmRNA and targeted for degradation. The ribosome is freed to recommence translation, which seems to be the essential function of trans-translation. In Parafrankia sp. (strain EAN1pec), this protein is SsrA-binding protein.